A 576-amino-acid polypeptide reads, in one-letter code: Sulfite reductase [NADPH] hemoprotein beta-component (576 aa).

[4Fe-4S] cluster-binding residues include Cys435, Cys441, Cys480, and Cys484. Cys484 lines the siroheme pocket.

Belongs to the nitrite and sulfite reductase 4Fe-4S domain family. In terms of assembly, alpha(8)-beta(8). The alpha component is a flavoprotein, the beta component is a hemoprotein. The cofactor is siroheme. [4Fe-4S] cluster is required as a cofactor.

The catalysed reaction is hydrogen sulfide + 3 NADP(+) + 3 H2O = sulfite + 3 NADPH + 4 H(+). Its pathway is sulfur metabolism; hydrogen sulfide biosynthesis; hydrogen sulfide from sulfite (NADPH route): step 1/1. Component of the sulfite reductase complex that catalyzes the 6-electron reduction of sulfite to sulfide. This is one of several activities required for the biosynthesis of L-cysteine from sulfate. This Photorhabdus laumondii subsp. laumondii (strain DSM 15139 / CIP 105565 / TT01) (Photorhabdus luminescens subsp. laumondii) protein is Sulfite reductase [NADPH] hemoprotein beta-component.